Here is a 376-residue protein sequence, read N- to C-terminus: UPF0754 membrane protein SERP1382 (376 aa).

A run of 2 helical transmembrane segments spans residues 4 to 24 (ILLV…TNMI) and 356 to 376 (TLGF…AIFV).

The protein belongs to the UPF0754 family.

The protein localises to the cell membrane. This chain is UPF0754 membrane protein SERP1382, found in Staphylococcus epidermidis (strain ATCC 35984 / DSM 28319 / BCRC 17069 / CCUG 31568 / BM 3577 / RP62A).